An 82-amino-acid chain; its full sequence is P2Y purinoceptor 2 (82 aa).

Residues 1 to 25 (LPLSYGVVCVLGLCLNVVALYIFLC) form a helical membrane-spanning segment. At 26–35 (RLKTWNASTT) the chain is on the cytoplasmic side. The chain crosses the membrane as a helical span at residues 36 to 56 (YMFHLAVSDSLYAASLPLLVY). The Extracellular portion of the chain corresponds to 57–75 (YYAQGDHWPFSTVLCKLVR). A helical transmembrane segment spans residues 76–82 (FLFYTNL).

Belongs to the G-protein coupled receptor 1 family. In terms of tissue distribution, expressed in brain, heart, stria vascularis and vestibular labyrinth.

The protein localises to the cell membrane. Functionally, receptor for ATP and UTP coupled to G-proteins that activate a phosphatidylinositol-calcium second messenger system. Not activated by UDP. The sequence is that of P2Y purinoceptor 2 (P2RY2) from Meriones unguiculatus (Mongolian jird).